The following is a 420-amino-acid chain: Mannose-1-phosphate guanylyltransferase regulatory subunit alpha (420 aa).

A substrate-binding domain region spans residues 2-251 (LKAVILIGGP…DGIWSQIKSA (250 aa)). GDP-alpha-D-mannose is bound by residues Glu85 and Gln247. The tract at residues 273–420 (LAKHTPGGPR…SRSFTNQIIL (148 aa)) is hexapeptide repeat domain. A C-loop region spans residues 356 to 384 (TPNDPNPNDPRAHMDSESLFKDGKLLPAI).

The protein belongs to the transferase hexapeptide repeat family. Component of the GMPPA-GMPPB mannose-1-phosphate guanylyltransferase complex composed of 4 GMPPA subunits and 8 GMPPB subunits; the complex is organized into three layers, a central layer made up of 2 GMPPA dimers sandwiched between two layers each made up of 2 GMPPB dimers. As to expression, expressed in the liver (at protein level).

The protein resides in the cytoplasm. Its function is as follows. Regulatory subunit of the GMPPA-GMPPB mannose-1-phosphate guanylyltransferase complex; reduces the catalytic activity of GMPPB when part of the complex. Mediates allosteric feedback inhibition of GMPPB catalytic activity upon binding GDP-alpha-D-mannose. Together with GMPPB regulates GDP-alpha-D-mannose levels. In Sus scrofa (Pig), this protein is Mannose-1-phosphate guanylyltransferase regulatory subunit alpha (GMPPA).